Here is a 256-residue protein sequence, read N- to C-terminus: Major prion protein (256 aa).

Positions 1-24 (MVKSHIGSWILVLFVAMWSDVGLC) are cleaved as a signal peptide. The interval 25-233 (KKRPKPGGGW…ESQAYYQRGA (209 aa)) is interaction with GRB2, ERI3 and SYN1. A disordered region spans residues 28–110 (PKPGGGWNTG…QWNKPSKPKT (83 aa)). 5 repeat units span residues 54–62 (PQGGGGWGQ), 63–70 (PHGGGWGQ), 71–78 (PHGGGWGQ), 79–86 (PHGGGWGQ), and 87–95 (PHGGGGWGQ). A 5 X 8 AA tandem repeats of P-H-G-G-G-W-G-Q region spans residues 54-95 (PQGGGGWGQPHGGGWGQPHGGGWGQPHGGGWGQPHGGGGWGQ). Positions 55–97 (QGGGGWGQPHGGGWGQPHGGGWGQPHGGGWGQPHGGGGWGQGG) are enriched in gly residues. Cu(2+) is bound by residues histidine 64, glycine 65, glycine 66, histidine 72, glycine 73, glycine 74, histidine 80, glycine 81, glycine 82, histidine 88, glycine 90, and glycine 91. Cysteine 182 and cysteine 217 are disulfide-bonded. Residues asparagine 184 and asparagine 200 are each glycosylated (N-linked (GlcNAc...) asparagine). The GPI-anchor amidated alanine moiety is linked to residue alanine 233. Positions 234-256 (SVILFSSPPVILLISFLIFLIVG) are cleaved as a propeptide — removed in mature form.

It belongs to the prion family. Monomer and homodimer. Has a tendency to aggregate into amyloid fibrils containing a cross-beta spine, formed by a steric zipper of superposed beta-strands. Soluble oligomers may represent an intermediate stage on the path to fibril formation. Copper binding may promote oligomerization. Interacts with GRB2, APP, ERI3/PRNPIP and SYN1. Mislocalized cytosolically exposed PrP interacts with MGRN1; this interaction alters MGRN1 subcellular location and causes lysosomal enlargement. Interacts with KIAA1191.

The protein resides in the cell membrane. Its subcellular location is the golgi apparatus. Functionally, its primary physiological function is unclear. Has cytoprotective activity against internal or environmental stresses. May play a role in neuronal development and synaptic plasticity. May be required for neuronal myelin sheath maintenance. May play a role in iron uptake and iron homeostasis. Soluble oligomers are toxic to cultured neuroblastoma cells and induce apoptosis (in vitro). Association with GPC1 (via its heparan sulfate chains) targets PRNP to lipid rafts. Also provides Cu(2+) or Zn(2+) for the ascorbate-mediated GPC1 deaminase degradation of its heparan sulfate side chains. This is Major prion protein (PRNP) from Odocoileus hemionus (Mule deer).